Reading from the N-terminus, the 430-residue chain is Tol-Pal system protein TolB (430 aa).

Residues 1-21 (MKQALRVAFGFLMLWAAVLHA) form the signal peptide.

It belongs to the TolB family. In terms of assembly, the Tol-Pal system is composed of five core proteins: the inner membrane proteins TolA, TolQ and TolR, the periplasmic protein TolB and the outer membrane protein Pal. They form a network linking the inner and outer membranes and the peptidoglycan layer.

The protein localises to the periplasm. Part of the Tol-Pal system, which plays a role in outer membrane invagination during cell division and is important for maintaining outer membrane integrity. TolB occupies a key intermediary position in the Tol-Pal system because it communicates directly with both membrane-embedded components, Pal in the outer membrane and TolA in the inner membrane. This is Tol-Pal system protein TolB from Klebsiella pneumoniae (strain 342).